Consider the following 352-residue polypeptide: Phosphoribosylformylglycinamidine cyclo-ligase (352 aa).

The protein belongs to the AIR synthase family.

The protein resides in the cytoplasm. It carries out the reaction 2-formamido-N(1)-(5-O-phospho-beta-D-ribosyl)acetamidine + ATP = 5-amino-1-(5-phospho-beta-D-ribosyl)imidazole + ADP + phosphate + H(+). It participates in purine metabolism; IMP biosynthesis via de novo pathway; 5-amino-1-(5-phospho-D-ribosyl)imidazole from N(2)-formyl-N(1)-(5-phospho-D-ribosyl)glycinamide: step 2/2. The chain is Phosphoribosylformylglycinamidine cyclo-ligase from Azoarcus sp. (strain BH72).